The chain runs to 232 residues: 5'-methylthioadenosine/S-adenosylhomocysteine nucleosidase (232 aa).

Glu12 serves as the catalytic Proton acceptor. Residues Gly78, Ile152, and 173–174 (ME) contribute to the substrate site. Asp197 acts as the Proton donor in catalysis.

Belongs to the PNP/UDP phosphorylase family. MtnN subfamily. Homodimer.

The catalysed reaction is S-adenosyl-L-homocysteine + H2O = S-(5-deoxy-D-ribos-5-yl)-L-homocysteine + adenine. The enzyme catalyses S-methyl-5'-thioadenosine + H2O = 5-(methylsulfanyl)-D-ribose + adenine. It carries out the reaction 5'-deoxyadenosine + H2O = 5-deoxy-D-ribose + adenine. Its pathway is amino-acid biosynthesis; L-methionine biosynthesis via salvage pathway; S-methyl-5-thio-alpha-D-ribose 1-phosphate from S-methyl-5'-thioadenosine (hydrolase route): step 1/2. In terms of biological role, catalyzes the irreversible cleavage of the glycosidic bond in both 5'-methylthioadenosine (MTA) and S-adenosylhomocysteine (SAH/AdoHcy) to adenine and the corresponding thioribose, 5'-methylthioribose and S-ribosylhomocysteine, respectively. Also cleaves 5'-deoxyadenosine, a toxic by-product of radical S-adenosylmethionine (SAM) enzymes, into 5-deoxyribose and adenine. Thus, is required for in vivo function of the radical SAM enzymes biotin synthase and lipoic acid synthase, that are inhibited by 5'-deoxyadenosine accumulation. The protein is 5'-methylthioadenosine/S-adenosylhomocysteine nucleosidase of Salmonella choleraesuis (strain SC-B67).